A 154-amino-acid chain; its full sequence is Egg-lysin (154 aa).

A signal peptide spans 1-18 (MKLLVLCIFAMMATLAMS).

Monomer. Homodimer. Molecules associate into dimers and then rapidly dissociate again. Interacts (as a monomer) with the egg vitelline layer protein VERL (via VERL repeats); each VERL chain can bind multiple copies of lysin. In terms of tissue distribution, sperm (at protein level).

The protein resides in the cytoplasmic vesicle. It localises to the secretory vesicle. Its subcellular location is the acrosome lumen. Functionally, creates a 3 um hole in the egg vitelline layer through which the sperm passes. Does not have enzyme activity. Species-specific interaction between the sperm protein lysin and the egg protein VERL exposes a basic surface on lysin that may dissociate the egg vitelline layer via electrostatic repulsion. Plays a role in ensuring species-specific fertilization. In Haliotis rufescens (California red abalone), this protein is Egg-lysin.